The chain runs to 223 residues: Ribosomal RNA small subunit methyltransferase G (223 aa).

Residues G84, L89, 135–136, and R150 each bind S-adenosyl-L-methionine; that span reads VE.

This sequence belongs to the methyltransferase superfamily. RNA methyltransferase RsmG family.

The protein resides in the cytoplasm. It catalyses the reaction guanosine(527) in 16S rRNA + S-adenosyl-L-methionine = N(7)-methylguanosine(527) in 16S rRNA + S-adenosyl-L-homocysteine. Specifically methylates the N7 position of guanine in position 527 of 16S rRNA. In Saccharophagus degradans (strain 2-40 / ATCC 43961 / DSM 17024), this protein is Ribosomal RNA small subunit methyltransferase G.